Here is a 429-residue protein sequence, read N- to C-terminus: Growth/differentiation factor 2 (429 aa).

Residues 1-22 form the signal peptide; sequence MCPGALWVALPLLSLLAGSLQG. A propeptide spanning residues 23 to 319 is cleaved from the precursor; that stretch reads KPLQSWGRGS…AGSTLARRKR (297 aa). N-linked (GlcNAc...) asparagine glycosylation is found at Asn-71 and Asn-136. The segment covering 283-301 has biased composition (basic and acidic residues); that stretch reads VLKKLSKDGSTEAGESSHE. Residues 283–308 are disordered; the sequence is VLKKLSKDGSTEAGESSHEEDTDGHV. Intrachain disulfides connect Cys-327–Cys-393, Cys-356–Cys-426, and Cys-360–Cys-428. An interaction with ENG region spans residues 402 to 416; that stretch reads SVLYKDDMGVPTLKY.

This sequence belongs to the TGF-beta family. In terms of assembly, homodimer; disulfide-linked. Detected in extracellular fluid as mature homodimer, and in complex with its propeptide. Interacts with ACVRL1, BMPR2 and ACVR2B with high affinity (in vitro). Identified in a complex with ACVRL1 and ACVR2B. Has ten times lower affinity for ACVR2A (in vitro). Interacts with ENG, forming a heterotetramer with a 2:2 stoichiometry. Can form a heteromeric complex with ENG and ACVRL1. Interacts with type I receptor ACVR1. In terms of processing, a reversible disulfide bond can be formed between the two subunits in the homodimer; this has no effect on GDF2 activity. Detected in blood plasma (at protein level).

It localises to the secreted. Its function is as follows. Potent circulating inhibitor of angiogenesis. Signals through the type I activin receptor ACVRL1 but not other Alks. Signaling through SMAD1 in endothelial cells requires TGF-beta coreceptor endoglin/ENG. This is Growth/differentiation factor 2 (GDF2) from Homo sapiens (Human).